The following is a 207-amino-acid chain: Peptidyl-tRNA hydrolase (207 aa).

Position 14 (Tyr14) interacts with tRNA. His19 acts as the Proton acceptor in catalysis. TRNA contacts are provided by Phe68, Asn70, and Asn116.

The protein belongs to the PTH family. Monomer.

The protein localises to the cytoplasm. The enzyme catalyses an N-acyl-L-alpha-aminoacyl-tRNA + H2O = an N-acyl-L-amino acid + a tRNA + H(+). Its function is as follows. Hydrolyzes ribosome-free peptidyl-tRNAs (with 1 or more amino acids incorporated), which drop off the ribosome during protein synthesis, or as a result of ribosome stalling. In terms of biological role, catalyzes the release of premature peptidyl moieties from peptidyl-tRNA molecules trapped in stalled 50S ribosomal subunits, and thus maintains levels of free tRNAs and 50S ribosomes. In Hyphomonas neptunium (strain ATCC 15444), this protein is Peptidyl-tRNA hydrolase.